Consider the following 274-residue polypeptide: 2,3,4,5-tetrahydropyridine-2,6-dicarboxylate N-succinyltransferase (274 aa).

Substrate-binding residues include arginine 104 and aspartate 141.

Belongs to the transferase hexapeptide repeat family. Homotrimer.

The protein localises to the cytoplasm. It catalyses the reaction (S)-2,3,4,5-tetrahydrodipicolinate + succinyl-CoA + H2O = (S)-2-succinylamino-6-oxoheptanedioate + CoA. It participates in amino-acid biosynthesis; L-lysine biosynthesis via DAP pathway; LL-2,6-diaminopimelate from (S)-tetrahydrodipicolinate (succinylase route): step 1/3. The protein is 2,3,4,5-tetrahydropyridine-2,6-dicarboxylate N-succinyltransferase of Salmonella typhi.